Reading from the N-terminus, the 1767-residue chain is Trans-Golgi network-localized SYP41-interacting protein 1 (1767 aa).

The tract at residues 1–72 (MHEKDDLPQD…LTTDDDDNDD (72 aa)) is disordered. The Cytoplasmic portion of the chain corresponds to 1 to 1748 (MHEKDDLPQD…RVLMSRPQAR (1748 aa)). A compositionally biased stretch (acidic residues) spans 16–32 (IENDDESNGQEEEELDP). Coiled-coil stretches lie at residues 276–436 (LSHL…MSTA), 493–516 (VRSL…LKDL), 570–590 (KSNI…MEET), 684–805 (VSNL…LQQS), and 845–1082 (IQEV…LSSK). Positions 1177–1190 (DNSVNTEPENSQGS) are enriched in polar residues. Residues 1177–1198 (DNSVNTEPENSQGSAADEDEIS) are disordered. Coiled-coil stretches lie at residues 1251–1310 (NSSL…FQEN), 1362–1424 (IRDM…WHEK), 1522–1542 (LKKA…AKNE), and 1603–1630 (LAGS…KAIQ). Residues 1749-1766 (LGVMVYSLLLHLWLLASI) form a helical; Anchor for type IV membrane protein membrane-spanning segment. Leu-1767 is a topological domain (vesicular).

As to quaternary structure, interacts with SYP41. In terms of tissue distribution, expressed ubiquitously in roots, leaves and flowers, and, to a lower extent, in stems.

The protein resides in the golgi apparatus. It localises to the trans-Golgi network membrane. Its function is as follows. Tethering factor involved in vesicle fusion at the trans-Golgi network (TGN) thus being required for efficient protein trafficking to the vacuole. Implicated in resistance to salt and osmotic stresses. Modulates the cell morphology (e.g. epidermal cell file rotation (CFR) and cell expansion) in mature regions of roots and the base of hypocotyls as well as root skewing, a process leading to root movement within the soil in order to maximize anchorage and nutrient acquisition, probably by regulating microtubule stabilization independently of their orientation. This is Trans-Golgi network-localized SYP41-interacting protein 1 from Arabidopsis thaliana (Mouse-ear cress).